The sequence spans 265 residues: Uridylate kinase (265 aa).

Residues 1–29 (MTESREPHVAGSAAPRPEPANGLASGQPS) form a disordered region. Residue 40–43 (KLGG) coordinates ATP. Gly-81 provides a ligand contact to UMP. ATP-binding residues include Gly-82 and Arg-86. UMP contacts are provided by residues Asp-101 and 162–169 (MGLPYFST). Phe-195 and Asp-198 together coordinate ATP.

Belongs to the UMP kinase family. Homohexamer.

The protein localises to the cytoplasm. It catalyses the reaction UMP + ATP = UDP + ADP. Its pathway is pyrimidine metabolism; CTP biosynthesis via de novo pathway; UDP from UMP (UMPK route): step 1/1. Its activity is regulated as follows. Inhibited by UTP. Catalyzes the reversible phosphorylation of UMP to UDP. This is Uridylate kinase from Mycobacterium avium (strain 104).